Consider the following 164-residue polypeptide: Protein-export protein SecB (164 aa).

It belongs to the SecB family. As to quaternary structure, homotetramer, a dimer of dimers. One homotetramer interacts with 1 SecA dimer.

The protein localises to the cytoplasm. Functionally, one of the proteins required for the normal export of preproteins out of the cell cytoplasm. It is a molecular chaperone that binds to a subset of precursor proteins, maintaining them in a translocation-competent state. It also specifically binds to its receptor SecA. The chain is Protein-export protein SecB from Shewanella denitrificans (strain OS217 / ATCC BAA-1090 / DSM 15013).